Here is a 208-residue protein sequence, read N- to C-terminus: Large ribosomal subunit protein bL25 (208 aa).

Belongs to the bacterial ribosomal protein bL25 family. CTC subfamily. As to quaternary structure, part of the 50S ribosomal subunit; part of the 5S rRNA/L5/L18/L25 subcomplex. Contacts the 5S rRNA. Binds to the 5S rRNA independently of L5 and L18.

This is one of the proteins that binds to the 5S RNA in the ribosome where it forms part of the central protuberance. The polypeptide is Large ribosomal subunit protein bL25 (Leptothrix cholodnii (strain ATCC 51168 / LMG 8142 / SP-6) (Leptothrix discophora (strain SP-6))).